The chain runs to 213 residues: Probable nicotinate-nucleotide adenylyltransferase (213 aa).

Positions 194-213 (RKPNNGEAKDGDVKDEEAVR) are disordered. The segment covering 200–213 (EAKDGDVKDEEAVR) has biased composition (basic and acidic residues).

It belongs to the NadD family.

The enzyme catalyses nicotinate beta-D-ribonucleotide + ATP + H(+) = deamido-NAD(+) + diphosphate. It functions in the pathway cofactor biosynthesis; NAD(+) biosynthesis; deamido-NAD(+) from nicotinate D-ribonucleotide: step 1/1. Functionally, catalyzes the reversible adenylation of nicotinate mononucleotide (NaMN) to nicotinic acid adenine dinucleotide (NaAD). The protein is Probable nicotinate-nucleotide adenylyltransferase of Mycolicibacterium smegmatis (strain ATCC 700084 / mc(2)155) (Mycobacterium smegmatis).